Consider the following 142-residue polypeptide: uncharacterized protein (142 aa).

This is an uncharacterized protein from Saccharomyces cerevisiae (strain ATCC 204508 / S288c) (Baker's yeast).